Here is a 500-residue protein sequence, read N- to C-terminus: NAD(P)H-quinone oxidoreductase chain 4, chloroplastic (500 aa).

Helical transmembrane passes span 4–24, 37–57, 87–107, 113–130, 134–154, 167–187, 208–228, 242–262, 272–292, 305–325, 330–350, 386–406, 416–436, and 462–482; these read FPWL…IFFL, IGIC…FFQL, IGPI…AWPV, LFHF…GLFS, LLLF…LLSM, FILY…GMGL, ALEI…LPII, HYST…YGLI, AHSI…IYAA, IAYS…SITD, GAVL…FLAG, LALP…GIIT, VLIT…SLSM, and LFIS…PDFV.

Belongs to the complex I subunit 4 family.

The protein resides in the plastid. Its subcellular location is the chloroplast thylakoid membrane. It catalyses the reaction a plastoquinone + NADH + (n+1) H(+)(in) = a plastoquinol + NAD(+) + n H(+)(out). The catalysed reaction is a plastoquinone + NADPH + (n+1) H(+)(in) = a plastoquinol + NADP(+) + n H(+)(out). This chain is NAD(P)H-quinone oxidoreductase chain 4, chloroplastic, found in Ceratophyllum demersum (Rigid hornwort).